Consider the following 230-residue polypeptide: Ribosomal RNA large subunit methyltransferase E (230 aa).

Gly-76, Trp-78, Asp-99, Asp-115, and Asp-139 together coordinate S-adenosyl-L-methionine. Lys-179 (proton acceptor) is an active-site residue.

This sequence belongs to the class I-like SAM-binding methyltransferase superfamily. RNA methyltransferase RlmE family.

It localises to the cytoplasm. It carries out the reaction uridine(2552) in 23S rRNA + S-adenosyl-L-methionine = 2'-O-methyluridine(2552) in 23S rRNA + S-adenosyl-L-homocysteine + H(+). Specifically methylates the uridine in position 2552 of 23S rRNA at the 2'-O position of the ribose in the fully assembled 50S ribosomal subunit. The protein is Ribosomal RNA large subunit methyltransferase E of Nitrobacter winogradskyi (strain ATCC 25391 / DSM 10237 / CIP 104748 / NCIMB 11846 / Nb-255).